The following is a 182-amino-acid chain: Ribosome maturation factor RimM (182 aa).

The PRC barrel domain maps to 103-182; sequence EDDYYWKDLM…RVEVDWDPGF (80 aa).

This sequence belongs to the RimM family. In terms of assembly, binds ribosomal protein uS19.

The protein resides in the cytoplasm. In terms of biological role, an accessory protein needed during the final step in the assembly of 30S ribosomal subunit, possibly for assembly of the head region. Essential for efficient processing of 16S rRNA. May be needed both before and after RbfA during the maturation of 16S rRNA. It has affinity for free ribosomal 30S subunits but not for 70S ribosomes. The sequence is that of Ribosome maturation factor RimM from Yersinia enterocolitica serotype O:8 / biotype 1B (strain NCTC 13174 / 8081).